The primary structure comprises 490 residues: Aspartyl/glutamyl-tRNA(Asn/Gln) amidotransferase subunit B (490 aa).

This sequence belongs to the GatB/GatE family. GatB subfamily. Heterotrimer of A, B and C subunits.

The enzyme catalyses L-glutamyl-tRNA(Gln) + L-glutamine + ATP + H2O = L-glutaminyl-tRNA(Gln) + L-glutamate + ADP + phosphate + H(+). It carries out the reaction L-aspartyl-tRNA(Asn) + L-glutamine + ATP + H2O = L-asparaginyl-tRNA(Asn) + L-glutamate + ADP + phosphate + 2 H(+). Functionally, allows the formation of correctly charged Asn-tRNA(Asn) or Gln-tRNA(Gln) through the transamidation of misacylated Asp-tRNA(Asn) or Glu-tRNA(Gln) in organisms which lack either or both of asparaginyl-tRNA or glutaminyl-tRNA synthetases. The reaction takes place in the presence of glutamine and ATP through an activated phospho-Asp-tRNA(Asn) or phospho-Glu-tRNA(Gln). The polypeptide is Aspartyl/glutamyl-tRNA(Asn/Gln) amidotransferase subunit B (Prochlorococcus marinus (strain MIT 9312)).